A 1225-amino-acid chain; its full sequence is Chromosome-associated kinesin KIF4 (1225 aa).

A Kinesin motor domain is found at 9 to 338 (IPVRVVRCRP…LRYADRARKI (330 aa)). Residue 88-95 (GQTGSGKT) participates in ATP binding. The stretch at 352–1003 (ELNHLKQQVQ…LKQKMLLVQV (652 aa)) forms a coiled coil. 3 disordered regions span residues 498-520 (QDAA…FTTQ), 717-744 (NKRL…GMEG), and 1006-1047 (GQKL…PTPE). Positions 507-520 (GQVTKRSSDDFTTQ) are enriched in polar residues. Basic and acidic residues predominate over residues 719–738 (RLKDALQKQREAADKRKESQ). The segment at 1004 to 1225 (ASGQKLRRDQ…GCTPIKEEID (222 aa)) is globular.

It belongs to the TRAFAC class myosin-kinesin ATPase superfamily. Kinesin family. Chromokinesin subfamily. Requires [2Fe-2S] cluster as cofactor. [4Fe-4S] cluster serves as cofactor. As to expression, expressed in proliferating cells; neuroepithelium of embryos.

The protein localises to the nucleus. The protein resides in the chromosome. Its subcellular location is the cytoplasm. It localises to the cytoskeleton. Functionally, iron-sulfur (Fe-S) cluster binding motor protein that has a role in chromosome segregation during mitosis. Required for mitotic chromosomal positioning and bipolar spindle stabilization. This chain is Chromosome-associated kinesin KIF4 (KIF4), found in Gallus gallus (Chicken).